The chain runs to 297 residues: Phosphatidylinositol N-acetylglucosaminyltransferase subunit C (297 aa).

4 helical membrane-spanning segments follow: residues 67-87 (VFVVIWWYMDEGLLAPQWLFG), 88-108 (TGLASSLIGYVLFDFIDGGEG), 153-173 (AVFMLLGHLIFFDYGANAAIV), and 239-259 (ALGGLLSISAVGAILFALLLI).

The protein belongs to the PIGC family. In terms of assembly, component of the glycosylphosphatidylinositol-N-acetylglucosaminyltransferase (GPI-GnT) complex composed at least by PIGA, PIGC, PIGH, PIGP, PIGQ, PIGY and DPM2. Interacts with PIGQ. Interacts with the heterodimer PIGA:PIGH.

The protein resides in the endoplasmic reticulum membrane. The protein operates within glycolipid biosynthesis; glycosylphosphatidylinositol-anchor biosynthesis. In terms of biological role, part of the glycosylphosphatidylinositol-N-acetylglucosaminyltransferase (GPI-GnT) complex that catalyzes the transfer of N-acetylglucosamine from UDP-N-acetylglucosamine to phosphatidylinositol and participates in the first step of GPI biosynthesis. In Bos taurus (Bovine), this protein is Phosphatidylinositol N-acetylglucosaminyltransferase subunit C.